The chain runs to 499 residues: Aspartyl/glutamyl-tRNA(Asn/Gln) amidotransferase subunit B (499 aa).

Belongs to the GatB/GatE family. GatB subfamily. As to quaternary structure, heterotrimer of A, B and C subunits.

It catalyses the reaction L-glutamyl-tRNA(Gln) + L-glutamine + ATP + H2O = L-glutaminyl-tRNA(Gln) + L-glutamate + ADP + phosphate + H(+). It carries out the reaction L-aspartyl-tRNA(Asn) + L-glutamine + ATP + H2O = L-asparaginyl-tRNA(Asn) + L-glutamate + ADP + phosphate + 2 H(+). In terms of biological role, allows the formation of correctly charged Asn-tRNA(Asn) or Gln-tRNA(Gln) through the transamidation of misacylated Asp-tRNA(Asn) or Glu-tRNA(Gln) in organisms which lack either or both of asparaginyl-tRNA or glutaminyl-tRNA synthetases. The reaction takes place in the presence of glutamine and ATP through an activated phospho-Asp-tRNA(Asn) or phospho-Glu-tRNA(Gln). The polypeptide is Aspartyl/glutamyl-tRNA(Asn/Gln) amidotransferase subunit B (Bifidobacterium longum (strain DJO10A)).